The sequence spans 411 residues: Lissencephaly-1 homolog (411 aa).

A LisH domain is found at 9–41; that stretch reads QREELNQAIADYLGSNGYADSLETFRKEADLST. A coiled-coil region spans residues 56–83; that stretch reads TSVIRLQKKVMELEAKLTEAEKEVIEGA. 7 WD repeats span residues 106–147, 148–187, 191–230, 233–272, 275–334, 337–376, and 379–411; these read GHRA…RSLK, GHTD…ECIK, GHDH…CVKT, GHRE…CKVE, DHEH…CLLT, GHDN…CMKT, and AHQH…WECR.

It belongs to the WD repeat LIS1/nudF family.

The protein localises to the cytoplasm. Its subcellular location is the cytoskeleton. It is found in the microtubule organizing center. The protein resides in the centrosome. Its function is as follows. Positively regulates the activity of the minus-end directed microtubule motor protein dynein. May enhance dynein-mediated microtubule sliding by targeting dynein to the microtubule plus end. Required for several dynein- and microtubule-dependent processes. This is Lissencephaly-1 homolog from Drosophila yakuba (Fruit fly).